A 289-amino-acid polypeptide reads, in one-letter code: Cyclo(L-tyrosyl-L-tyrosyl) synthase (289 aa).

The disordered stretch occupies residues 1–48; the sequence is MSYVAAEPGVLISPTDDLQSPRSAPAAHDENADGITGGTRDDSAPNSR. S88 serves as the catalytic Nucleophile. Residues N91, 229–233, and Y253 contribute to the substrate site; that span reads YICAE.

The protein belongs to the CDPS family. Homodimer.

It catalyses the reaction 2 L-tyrosyl-tRNA(Tyr) = cyclo(L-tyrosyl-L-tyrosyl) + 2 tRNA(Tyr). Its function is as follows. Involved in the biosynthesis of mycocyclosin. It uses activated amino acids in the form of aminoacyl-tRNAs (aa-tRNAs) as substrates to catalyze the ATP-independent formation of cyclodipeptides which are intermediates in diketopiperazine (DKP) biosynthetic pathways. Catalyzes the formation of cyclo(L-Tyr-L-Tyr) (cYY) from L-tyrosyl-tRNA(Tyr). In Mycobacterium tuberculosis (strain CDC 1551 / Oshkosh), this protein is Cyclo(L-tyrosyl-L-tyrosyl) synthase.